The chain runs to 444 residues: Probable glycine dehydrogenase (decarboxylating) subunit 1 (444 aa).

Belongs to the GcvP family. N-terminal subunit subfamily. As to quaternary structure, the glycine cleavage system is composed of four proteins: P, T, L and H. In this organism, the P 'protein' is a heterodimer of two subunits.

The catalysed reaction is N(6)-[(R)-lipoyl]-L-lysyl-[glycine-cleavage complex H protein] + glycine + H(+) = N(6)-[(R)-S(8)-aminomethyldihydrolipoyl]-L-lysyl-[glycine-cleavage complex H protein] + CO2. In terms of biological role, the glycine cleavage system catalyzes the degradation of glycine. The P protein binds the alpha-amino group of glycine through its pyridoxal phosphate cofactor; CO(2) is released and the remaining methylamine moiety is then transferred to the lipoamide cofactor of the H protein. This chain is Probable glycine dehydrogenase (decarboxylating) subunit 1, found in Chlorobaculum tepidum (strain ATCC 49652 / DSM 12025 / NBRC 103806 / TLS) (Chlorobium tepidum).